A 427-amino-acid polypeptide reads, in one-letter code: V-type proton ATPase subunit C 2 (427 aa).

A disordered region spans residues 292–319 (HKVKVTPLGNPDRPAAGQTDRERESEGE).

The protein belongs to the V-ATPase C subunit family. As to quaternary structure, V-ATPase is a heteromultimeric enzyme made up of two complexes: the ATP-hydrolytic V1 complex and the proton translocation V0 complex. The V1 complex consists of three catalytic AB heterodimers that form a heterohexamer, three peripheral stalks each consisting of EG heterodimers, one central rotor including subunits D and F, and the regulatory subunits C and H. The proton translocation complex V0 consists of the proton transport subunit a, a ring of proteolipid subunits c9c'', rotary subunit d, subunits e and f, and the accessory subunits ATP6AP1/Ac45 and ATP6AP2/PRR. Kidney and placenta.

Functionally, subunit of the V1 complex of vacuolar(H+)-ATPase (V-ATPase), a multisubunit enzyme composed of a peripheral complex (V1) that hydrolyzes ATP and a membrane integral complex (V0) that translocates protons. V-ATPase is responsible for acidifying and maintaining the pH of intracellular compartments and in some cell types, is targeted to the plasma membrane, where it is responsible for acidifying the extracellular environment. Subunit C is necessary for the assembly of the catalytic sector of the enzyme and is likely to have a specific function in its catalytic activity. The chain is V-type proton ATPase subunit C 2 (ATP6V1C2) from Homo sapiens (Human).